Here is a 206-residue protein sequence, read N- to C-terminus: Tumor protein D54 (206 aa).

An N-acetylmethionine modification is found at Met1. Residues 1–14 (MDSAGQDINLNSPN) are compositionally biased toward polar residues. Positions 1–24 (MDSAGQDINLNSPNKGLLSDSMTD) are disordered. Phosphoserine is present on residues Ser3, Ser12, Ser19, and Ser21. Residues 38–82 (VEGLTEAEEEELRAELTKVEEEIVTLRQVLAAKERHCGELKRRLG) adopt a coiled-coil conformation. 3 positions are modified to phosphoserine: Ser96, Ser149, and Ser161. Thr163 carries the post-translational modification Phosphothreonine. The residue at position 166 (Ser166) is a Phosphoserine. Position 173 is a phosphothreonine (Thr173). The segment covering 175-185 (KSKVVGDRENG) has biased composition (basic and acidic residues). The interval 175 to 206 (KSKVVGDRENGSDNLPSSAGSGDKPLSDPAPF) is disordered. Ser192 and Ser195 each carry phosphoserine.

This sequence belongs to the TPD52 family. In terms of assembly, forms a homodimer or heterodimer with other members of the family. Interacts with MAL2.

In Homo sapiens (Human), this protein is Tumor protein D54 (TPD52L2).